The primary structure comprises 473 residues: MHFSIPETEVRSDENGSSYVAYNIHVNGVLHCRVRYSQLLGLHEQIKKEYGNNVVPAFPPKKIFTLTPAEVDQRREQLEKYMQAVRQDPILGSSEMFNSFLRKAQQETQQIPTEEVQLEIYLSNGQKVKVNILTSDQTEDVLEAVASKLDLPDELVGYFSLFLVQERADGSCTYVRKLQEFELPYVSITSLHSSDYRIILRKSYWDTAYDSDVMDDRVGLNLLYAQTVSDIDRGWILVNKEQHRQLKSLQEKGSKKEFIRLAQTLKYYGYIKFDPCITDFPEKGCHVIVGAGNNELNFHVKLPNEQMKEGSFKVTRMRCWRVTSSQVPVANGTANPSSSSKCDVKLELAFEYLMSKDRLQWVTITSQQAIMMSICLQSMVDELMVKKSGGSIKKQMQKKRLNGSLQRSDSQQAVKSPPILDSPDPNREQVVKLSTKLSSVSLRGLSSSNSAGDISGNDFHGNYAFEGIGDDDL.

Residues Met1 to Thr108 enclose the PX domain. Residues Arg35, Ser37, Lys61, and Arg74 each coordinate a 1,2-diacyl-sn-glycero-3-phospho-(1D-myo-inositol-3-phosphate). Positions Glu114–Trp205 constitute a Ras-associating domain. Residues Glu114–Leu433 form an FERM-like region. Residues Gly269 to Leu433 form a PTB-like F3 module region. Positions Ser391–Val431 are disordered. Residues Gly403–Val414 show a composition bias toward polar residues.

It belongs to the sorting nexin family. In terms of assembly, monomer. Interacts with CCDC22, CCDC93, DSCR3 and VPS35L; the interaction with DSCR3 is direct and associates SNX17 with the retriever and CCC complexes.

It is found in the cytoplasm. It localises to the early endosome. Its subcellular location is the cytoplasmic vesicle membrane. Its function is as follows. Critical regulator of endosomal recycling of numerous surface proteins, including integrins, signaling receptor and channels. Binds to NPxY sequences in the cytoplasmic tails of target cargos. Associates with retriever and CCC complexes to prevent lysosomal degradation and promote cell surface recycling of numerous cargos such as integrins ITGB1, ITGB5 and their associated alpha subunits. Also required for maintenance of normal cell surface levels of APP and LRP1. Interacts with membranes containing phosphatidylinositol 3-phosphate (PtdIns(3P)). In Danio rerio (Zebrafish), this protein is Sorting nexin-17 (snx17).